The primary structure comprises 536 residues: Mitogen-activated protein kinase kinase kinase mom-4 (536 aa).

Positions 1-20 are enriched in low complexity; that stretch reads MDNSSQSKPSSSSSSHSPSP. Positions 1–34 are disordered; sequence MDNSSQSKPSSSSSSHSPSPAAITPTQRTTRDSG. The 255-residue stretch at 51–305 folds into the Protein kinase domain; it reads NLNSHYLGKG…SSECVEYFTL (255 aa). ATP is bound by residues 57–65 and lysine 84; that span reads LGKGTYGLV. Residue aspartate 176 is the Proton acceptor of the active site. A disordered region spans residues 314-438; it reads SVPLSDSSTN…EHRRDSNDEE (125 aa). 2 stretches are compositionally biased toward polar residues: residues 315–325 and 350–366; these read VPLSDSSTNGP and NNRT…QQPG. The span at 405–438 shows a compositional bias: basic and acidic residues; the sequence is KNFRDRAKSEQRQPHRDARPPPPFEHRRDSNDEE.

The protein belongs to the protein kinase superfamily. STE Ser/Thr protein kinase family. MAP kinase kinase kinase subfamily. As to quaternary structure, interacts with, and is activated by, tap-1. Mg(2+) serves as cofactor. Post-translationally, may be autophosphorylated.

The catalysed reaction is L-seryl-[protein] + ATP = O-phospho-L-seryl-[protein] + ADP + H(+). The enzyme catalyses L-threonyl-[protein] + ATP = O-phospho-L-threonyl-[protein] + ADP + H(+). In terms of biological role, part of the Wnt signaling pathway essential for the specification of the mesodermal cell fate in early embryos. Stimulates the wrm-1/lit-1-dependent phosphorylation of pop-1 and plays a role in the initial nuclear accumulation of wrm-1. This chain is Mitogen-activated protein kinase kinase kinase mom-4, found in Caenorhabditis elegans.